The primary structure comprises 490 residues: Protein nucleotidyltransferase YdiU (490 aa).

Residues Gly-86, Gly-88, Arg-89, Lys-109, Asp-121, Gly-122, Arg-172, and Arg-179 each coordinate ATP. Asp-248 (proton acceptor) is an active-site residue. 2 residues coordinate Mg(2+): Asn-249 and Asp-258. Asp-258 lines the ATP pocket.

The protein belongs to the SELO family. Mg(2+) is required as a cofactor. Requires Mn(2+) as cofactor.

The enzyme catalyses L-seryl-[protein] + ATP = 3-O-(5'-adenylyl)-L-seryl-[protein] + diphosphate. The catalysed reaction is L-threonyl-[protein] + ATP = 3-O-(5'-adenylyl)-L-threonyl-[protein] + diphosphate. It carries out the reaction L-tyrosyl-[protein] + ATP = O-(5'-adenylyl)-L-tyrosyl-[protein] + diphosphate. It catalyses the reaction L-histidyl-[protein] + UTP = N(tele)-(5'-uridylyl)-L-histidyl-[protein] + diphosphate. The enzyme catalyses L-seryl-[protein] + UTP = O-(5'-uridylyl)-L-seryl-[protein] + diphosphate. The catalysed reaction is L-tyrosyl-[protein] + UTP = O-(5'-uridylyl)-L-tyrosyl-[protein] + diphosphate. In terms of biological role, nucleotidyltransferase involved in the post-translational modification of proteins. It can catalyze the addition of adenosine monophosphate (AMP) or uridine monophosphate (UMP) to a protein, resulting in modifications known as AMPylation and UMPylation. This chain is Protein nucleotidyltransferase YdiU, found in Rhizobium meliloti (strain 1021) (Ensifer meliloti).